Reading from the N-terminus, the 65-residue chain is Probable tautomerase RSp1151 (65 aa).

P2 acts as the Proton acceptor; via imino nitrogen in catalysis.

It belongs to the 4-oxalocrotonate tautomerase family.

The polypeptide is Probable tautomerase RSp1151 (Ralstonia nicotianae (strain ATCC BAA-1114 / GMI1000) (Ralstonia solanacearum)).